The primary structure comprises 90 residues: U7-theraphotoxin-Hhn1a 6 (90 aa).

Positions 1 to 19 (MKTAIFTVVLALAVFAVLS) are cleaved as a signal peptide. Residues 20–50 (FGWEANEKALSEEFTELIHEKEAASEAEARE) constitute a propeptide that is removed on maturation. 3 disulfides stabilise this stretch: C51-C65, C58-C70, and C64-C81.

It belongs to the neurotoxin 10 (Hwtx-1) family. 13 (Hntx-13) subfamily. Expressed by the venom gland.

The protein resides in the secreted. Ion channel inhibitor. This chain is U7-theraphotoxin-Hhn1a 6, found in Cyriopagopus hainanus (Chinese bird spider).